The chain runs to 339 residues: MNKASKYRENNLITYSKNIFIPLTEICKNDCGYCNFKKTPDDPSAIILKTKEEVLASLKEAERYGCSEALFTFGEDADEEESVQQKLAEFGYENIVDYVFDICKMTLEETSLLPHTNGGNFSYESLKKLKEVNASMGMMLESTSVRLMNTVAHNKSPGKNPEIRLKTISNAGKLKIPYTTGILIGIGETKEEIADSLLAIRDLYDKYGHIQEVIIQNFTTSPGIEMENWEEPTFLDMVRTVIAGKLLFRDTDVSIQVPPNLNHDTAQIFLLCGADDWGGVSPVSPDYVNPTSPWPTLDELNRLTQDAGFELIERMCVYEKYVNDKWLNETLLEKIANLS.

The 246-residue stretch at 13–258 (ITYSKNIFIP…RDTDVSIQVP (246 aa)) folds into the Radical SAM core domain. Positions 27, 31, and 34 each coordinate [4Fe-4S] cluster.

Belongs to the radical SAM superfamily. CofG family. In terms of assembly, consists of two subunits, CofG and CofH. [4Fe-4S] cluster serves as cofactor.

The catalysed reaction is 5-amino-5-(4-hydroxybenzyl)-6-(D-ribitylimino)-5,6-dihydrouracil + S-adenosyl-L-methionine = 7,8-didemethyl-8-hydroxy-5-deazariboflavin + 5'-deoxyadenosine + L-methionine + NH4(+) + H(+). It participates in cofactor biosynthesis; coenzyme F0 biosynthesis. Functionally, catalyzes the radical-mediated synthesis of 7,8-didemethyl-8-hydroxy-5-deazariboflavin from 5-amino-5-(4-hydroxybenzyl)-6-(D-ribitylimino)-5,6-dihydrouracil. The chain is 7,8-didemethyl-8-hydroxy-5-deazariboflavin synthase from Methanobrevibacter smithii (strain ATCC 35061 / DSM 861 / OCM 144 / PS).